The primary structure comprises 60 residues: Ixodegrin YY-39 (60 aa).

Positions 1–21 are cleaved as a signal peptide; sequence MNAALIAALLILGALTLDATA. The short motif at 49–51 is the Cell attachment site element; that stretch reads RGD.

Belongs to the ixodegrin family. In terms of processing, contains 3 disulfide bonds. Expressed in salivary glands.

It localises to the secreted. In terms of biological role, tick salivary platelet aggregation inhibitor that plays an important part in the anti-hemostatic strategy of ticks. Inhibits platelet aggregation induced by ADP, thrombin and thromboxane A2 (TXA2). Blocks platelet adhesion to soluble collagen (most probably through the binding to alpha-2/beta-1 integrin (ITGA2/ITGB1)) and binds to purified glycoprotein IIb/IIIa (ITGA2B/ITGB3) in a dose-dependent manner. In vivo, reduces thrombus weight effectively in a rat arteriovenous shunt model and inhibits thrombosis in a carrageenan-induced mouse tail thrombosis model. This is Ixodegrin YY-39 from Ixodes scapularis (Black-legged tick).